A 40-amino-acid chain; its full sequence is SRGISRYITKKNRHNTPSRLELRKFCPFCCKHMIHAEIKK.

It belongs to the bacterial ribosomal protein bL33 family.

It is found in the plastid. The protein localises to the chloroplast. The protein is Large ribosomal subunit protein bL33c (rpl33) of Pisum sativum (Garden pea).